The following is a 363-amino-acid chain: MAP kinase kinase mkk-4 (363 aa).

Residues 1–38 are disordered; that stretch reads MVQEDDENLRNSMSLRPTSLSTRPTSLSVNGNEKTLPE. Over residues 14-28 the composition is skewed to low complexity; that stretch reads SLRPTSLSTRPTSLS. Residues 66-330 enclose the Protein kinase domain; that stretch reads LQDLGAIGNG…YDTLKSFDFY (265 aa). ATP-binding positions include 72-80 and Lys-95; that span reads IGNGNFGTV. The active-site Proton acceptor is Asp-194.

This sequence belongs to the protein kinase superfamily. STE Ser/Thr protein kinase family. MAP kinase kinase subfamily. Expressed in the pharynx, including the corpus, isthmus and terminal bulb.

The protein resides in the cytoplasm. The enzyme catalyses L-seryl-[protein] + ATP = O-phospho-L-seryl-[protein] + ADP + H(+). It catalyses the reaction L-threonyl-[protein] + ATP = O-phospho-L-threonyl-[protein] + ADP + H(+). It carries out the reaction L-tyrosyl-[protein] + ATP = O-phospho-L-tyrosyl-[protein] + ADP + H(+). Its function is as follows. Activity is required in presynaptic neurons, in a dose-dependent manner, for normal presynaptic development and morphology. Plays a role in the formation of muscle connections, also called muscle arm extensions, between the body wall and the motor axons in the dorsal and ventral cord. This Caenorhabditis elegans protein is MAP kinase kinase mkk-4 (mkk-4).